We begin with the raw amino-acid sequence, 289 residues long: Mitochondrial fission regulator 1-like (289 aa).

T27 bears the Phosphothreonine mark. 8 positions are modified to phosphoserine: S38, S100, S107, S221, S222, S235, S258, and S270.

Belongs to the MTFR1 family. Post-translationally, phosphorylated by AMPK. Upon stress, phosphorylation by AMPK is sufficient to induce mitochondrial fragmentation.

It is found in the mitochondrion outer membrane. Mitochondrial protein required for adaptation of miochondrial dynamics to metabolic changes. Regulates mitochondrial morphology at steady state and mediates AMPK-dependent stress-induced mitochondrial fragmentation via the control of OPA1 levels. The protein is Mitochondrial fission regulator 1-like (Mtfr1l) of Rattus norvegicus (Rat).